A 278-amino-acid polypeptide reads, in one-letter code: Tryptophan synthase alpha chain (278 aa).

Active-site proton acceptor residues include glutamate 50 and aspartate 61.

The protein belongs to the TrpA family. As to quaternary structure, tetramer of two alpha and two beta chains.

It catalyses the reaction (1S,2R)-1-C-(indol-3-yl)glycerol 3-phosphate + L-serine = D-glyceraldehyde 3-phosphate + L-tryptophan + H2O. The protein operates within amino-acid biosynthesis; L-tryptophan biosynthesis; L-tryptophan from chorismate: step 5/5. Functionally, the alpha subunit is responsible for the aldol cleavage of indoleglycerol phosphate to indole and glyceraldehyde 3-phosphate. The polypeptide is Tryptophan synthase alpha chain (Rhodopseudomonas palustris (strain HaA2)).